The sequence spans 283 residues: Pantothenate synthetase (283 aa).

An ATP-binding site is contributed by methionine 26 to histidine 33. Histidine 33 acts as the Proton donor in catalysis. Position 57 (glutamine 57) interacts with (R)-pantoate. Glutamine 57 serves as a coordination point for beta-alanine. Position 148–151 (glycine 148–aspartate 151) interacts with ATP. Glutamine 154 contacts (R)-pantoate. ATP-binding positions include alanine 177 and leucine 185 to arginine 188.

The protein belongs to the pantothenate synthetase family. In terms of assembly, homodimer.

Its subcellular location is the cytoplasm. It catalyses the reaction (R)-pantoate + beta-alanine + ATP = (R)-pantothenate + AMP + diphosphate + H(+). It participates in cofactor biosynthesis; (R)-pantothenate biosynthesis; (R)-pantothenate from (R)-pantoate and beta-alanine: step 1/1. Functionally, catalyzes the condensation of pantoate with beta-alanine in an ATP-dependent reaction via a pantoyl-adenylate intermediate. The chain is Pantothenate synthetase from Delftia acidovorans (strain DSM 14801 / SPH-1).